A 405-amino-acid polypeptide reads, in one-letter code: Replication factor C large subunit (405 aa).

47–54 provides a ligand contact to ATP; sequence GPPGVGKT.

It belongs to the activator 1 small subunits family. RfcL subfamily. In terms of assembly, heteromultimer composed of small subunits (RfcS) and large subunits (RfcL).

In terms of biological role, part of the RFC clamp loader complex which loads the PCNA sliding clamp onto DNA. The sequence is that of Replication factor C large subunit from Saccharolobus islandicus (strain M.16.27) (Sulfolobus islandicus).